The primary structure comprises 279 residues: 3-methyl-2-oxobutanoate hydroxymethyltransferase (279 aa).

Residues D43 and D82 each contribute to the Mg(2+) site. Residues 43–44 (DS), D82, and K112 each bind 3-methyl-2-oxobutanoate. E114 is a Mg(2+) binding site. E181 functions as the Proton acceptor in the catalytic mechanism.

Belongs to the PanB family. In terms of assembly, homodecamer; pentamer of dimers. Mg(2+) is required as a cofactor.

The protein localises to the cytoplasm. The catalysed reaction is 3-methyl-2-oxobutanoate + (6R)-5,10-methylene-5,6,7,8-tetrahydrofolate + H2O = 2-dehydropantoate + (6S)-5,6,7,8-tetrahydrofolate. It participates in cofactor biosynthesis; (R)-pantothenate biosynthesis; (R)-pantoate from 3-methyl-2-oxobutanoate: step 1/2. Its function is as follows. Catalyzes the reversible reaction in which hydroxymethyl group from 5,10-methylenetetrahydrofolate is transferred onto alpha-ketoisovalerate to form ketopantoate. This Halalkalibacterium halodurans (strain ATCC BAA-125 / DSM 18197 / FERM 7344 / JCM 9153 / C-125) (Bacillus halodurans) protein is 3-methyl-2-oxobutanoate hydroxymethyltransferase.